Consider the following 319-residue polypeptide: Probable cell division protein WhiA (319 aa).

A DNA-binding region (H-T-H motif) is located at residues S278–R311.

Belongs to the WhiA family.

Its function is as follows. Involved in cell division and chromosome segregation. In Heliobacterium modesticaldum (strain ATCC 51547 / Ice1), this protein is Probable cell division protein WhiA.